A 37-amino-acid polypeptide reads, in one-letter code: Cytochrome b6-f complex subunit 5 (37 aa).

A helical membrane pass occupies residues 5-25 (LLSGIILGLIPITICGLFFTA).

Belongs to the PetG family. The 4 large subunits of the cytochrome b6-f complex are cytochrome b6, subunit IV (17 kDa polypeptide, PetD), cytochrome f and the Rieske protein, while the 4 small subunits are PetG, PetL, PetM and PetN. The complex functions as a dimer.

The protein localises to the plastid. Its subcellular location is the chloroplast thylakoid membrane. In terms of biological role, component of the cytochrome b6-f complex, which mediates electron transfer between photosystem II (PSII) and photosystem I (PSI), cyclic electron flow around PSI, and state transitions. PetG is required for either the stability or assembly of the cytochrome b6-f complex. The chain is Cytochrome b6-f complex subunit 5 from Euglena gracilis.